Consider the following 58-residue polypeptide: Sperm protamine P1 (58 aa).

A disordered region spans residues 1–58; sequence MARYRRRSRSRSRSRYGRRRRRSRSRRRRSRRRRRRRGRRGRGYHRRSPHRRRRRRRR.

It belongs to the protamine P1 family. As to expression, testis.

It is found in the nucleus. Its subcellular location is the chromosome. Protamines substitute for histones in the chromatin of sperm during the haploid phase of spermatogenesis. They compact sperm DNA into a highly condensed, stable and inactive complex. The sequence is that of Sperm protamine P1 (PRM1) from Monodelphis domestica (Gray short-tailed opossum).